A 196-amino-acid polypeptide reads, in one-letter code: Large ribosomal subunit protein uL18 (196 aa).

Belongs to the universal ribosomal protein uL18 family. As to quaternary structure, part of the 50S ribosomal subunit. Contacts the 5S and 23S rRNAs.

In terms of biological role, this is one of the proteins that bind and probably mediate the attachment of the 5S RNA into the large ribosomal subunit, where it forms part of the central protuberance. The chain is Large ribosomal subunit protein uL18 from Thermofilum pendens (strain DSM 2475 / Hrk 5).